Reading from the N-terminus, the 1209-residue chain is Major DNA-binding protein (1209 aa).

Residues 290–312 (NAGKGSGRAQRQGDGSGSKNSAS) form a disordered region. Residues 503 to 516 (CGLCNQATRPACAH) fold into a zinc finger. The short motif at 849–850 (FW) is the Required for filament formation element. The tract at residues 1182-1209 (QKRSLPDDILFDMGAPPEKKSGLTFDML) is required for nuclear localization.

It belongs to the herpesviridae major DNA-binding protein family. As to quaternary structure, homooligomers. Forms double-helical filaments necessary for the formation of replication compartments within the host nucleus. Interacts with the origin-binding protein. Interacts with the helicase primase complex; this interaction stimulates primer synthesis activity of the helicase-primase complex. Interacts with the DNA polymerase. Interacts with the alkaline exonuclease; this interaction increases its nuclease processivity.

It localises to the host nucleus. Functionally, plays several crucial roles in viral infection. Participates in the opening of the viral DNA origin to initiate replication by interacting with the origin-binding protein. May disrupt loops, hairpins and other secondary structures present on ssDNA to reduce and eliminate pausing of viral DNA polymerase at specific sites during elongation. Promotes viral DNA recombination by performing strand-transfer, characterized by the ability to transfer a DNA strand from a linear duplex to a complementary single-stranded DNA circle. Can also catalyze the renaturation of complementary single strands. Additionally, reorganizes the host cell nucleus, leading to the formation of prereplicative sites and replication compartments. This process is driven by the protein which can form double-helical filaments in the absence of DNA. The chain is Major DNA-binding protein from Equine herpesvirus 1 (strain Ab4p) (EHV-1).